Reading from the N-terminus, the 199-residue chain is MIGCLIGEVFALEAPTVLLNVNGVGYEIDTPLSTFCQLQKGQKVTLWTHLVIREDAQQLYGFSDAQEKTIFRTLLKVNGVGPKMALGILSTLSVELLVHTIEHDDVNTLVKVPGVGKKTAERLMIELRDRFKTLAQGTSSAAALPQIQFVSNSPVAEAEAALQSLGYKPLEAQKAVAAVKADYTESADIIRAALKSMMK.

The domain I stretch occupies residues 1 to 63; sequence MIGCLIGEVF…EDAQQLYGFS (63 aa). Residues 64–142 are domain II; it reads DAQEKTIFRT…TLAQGTSSAA (79 aa). The tract at residues 143 to 150 is flexible linker; that stretch reads ALPQIQFV. Positions 150–199 are domain III; that stretch reads VSNSPVAEAEAALQSLGYKPLEAQKAVAAVKADYTESADIIRAALKSMMK.

The protein belongs to the RuvA family. As to quaternary structure, homotetramer. Forms an RuvA(8)-RuvB(12)-Holliday junction (HJ) complex. HJ DNA is sandwiched between 2 RuvA tetramers; dsDNA enters through RuvA and exits via RuvB. An RuvB hexamer assembles on each DNA strand where it exits the tetramer. Each RuvB hexamer is contacted by two RuvA subunits (via domain III) on 2 adjacent RuvB subunits; this complex drives branch migration. In the full resolvosome a probable DNA-RuvA(4)-RuvB(12)-RuvC(2) complex forms which resolves the HJ.

The protein localises to the cytoplasm. The RuvA-RuvB-RuvC complex processes Holliday junction (HJ) DNA during genetic recombination and DNA repair, while the RuvA-RuvB complex plays an important role in the rescue of blocked DNA replication forks via replication fork reversal (RFR). RuvA specifically binds to HJ cruciform DNA, conferring on it an open structure. The RuvB hexamer acts as an ATP-dependent pump, pulling dsDNA into and through the RuvAB complex. HJ branch migration allows RuvC to scan DNA until it finds its consensus sequence, where it cleaves and resolves the cruciform DNA. This is Holliday junction branch migration complex subunit RuvA from Acinetobacter baumannii (strain SDF).